A 135-amino-acid chain; its full sequence is Large ribosomal subunit protein uL22 (135 aa).

It belongs to the universal ribosomal protein uL22 family. As to quaternary structure, part of the 50S ribosomal subunit.

In terms of biological role, this protein binds specifically to 23S rRNA; its binding is stimulated by other ribosomal proteins, e.g. L4, L17, and L20. It is important during the early stages of 50S assembly. It makes multiple contacts with different domains of the 23S rRNA in the assembled 50S subunit and ribosome. The globular domain of the protein is located near the polypeptide exit tunnel on the outside of the subunit, while an extended beta-hairpin is found that lines the wall of the exit tunnel in the center of the 70S ribosome. This Malacoplasma penetrans (strain HF-2) (Mycoplasma penetrans) protein is Large ribosomal subunit protein uL22.